Here is a 438-residue protein sequence, read N- to C-terminus: Aminopeptidase E (438 aa).

Active-site residues include Cys70, His362, and Asn383.

This sequence belongs to the peptidase C1 family.

It is found in the cytoplasm. Its function is as follows. Can hydrolyze internal peptide bonds in Met-enkephalin and bradykinin; however, hydrolysis of alpha-, beta-, and kappa-caseins is not detected. The chain is Aminopeptidase E (pepE) from Lactobacillus helveticus (Lactobacillus suntoryeus).